The following is a 341-amino-acid chain: Methionine import ATP-binding protein MetN 2 (341 aa).

An ABC transporter domain is found at 2–241 (ILLENVKKIY…PQQDITKRFV (240 aa)). Residue 38–45 (GYSGAGKS) coordinates ATP.

This sequence belongs to the ABC transporter superfamily. Methionine importer (TC 3.A.1.24) family. In terms of assembly, the complex is composed of two ATP-binding proteins (MetN), two transmembrane proteins (MetI) and a solute-binding protein (MetQ).

Its subcellular location is the cell membrane. It catalyses the reaction L-methionine(out) + ATP + H2O = L-methionine(in) + ADP + phosphate + H(+). It carries out the reaction D-methionine(out) + ATP + H2O = D-methionine(in) + ADP + phosphate + H(+). Its function is as follows. Part of the ABC transporter complex MetNIQ involved in methionine import. Responsible for energy coupling to the transport system. The polypeptide is Methionine import ATP-binding protein MetN 2 (Bacillus thuringiensis subsp. konkukian (strain 97-27)).